Here is a 249-residue protein sequence, read N- to C-terminus: Quinate/shikimate dehydrogenase (249 aa).

Residues Lys-32 and Asp-68 each coordinate substrate. NAD(+) is bound by residues 93–96 (AGGA), 116–119 (NRRD), Lys-166, 193–196 (CVYN), and Gly-216.

This sequence belongs to the shikimate dehydrogenase family. As to quaternary structure, homodimer.

It carries out the reaction L-quinate + NAD(+) = 3-dehydroquinate + NADH + H(+). The catalysed reaction is L-quinate + NADP(+) = 3-dehydroquinate + NADPH + H(+). It catalyses the reaction shikimate + NADP(+) = 3-dehydroshikimate + NADPH + H(+). The enzyme catalyses shikimate + NAD(+) = 3-dehydroshikimate + NADH + H(+). It functions in the pathway metabolic intermediate biosynthesis; chorismate biosynthesis; chorismate from D-erythrose 4-phosphate and phosphoenolpyruvate: step 4/7. In terms of biological role, the actual biological function of YdiB remains unclear, nor is it known whether 3-dehydroshikimate or quinate represents the natural substrate. Catalyzes the reversible NAD-dependent reduction of both 3-dehydroshikimate (DHSA) and 3-dehydroquinate to yield shikimate (SA) and quinate, respectively. It can use both NAD or NADP for catalysis, however it has higher catalytic efficiency with NAD. The polypeptide is Quinate/shikimate dehydrogenase (Shigella flexneri serotype 5b (strain 8401)).